A 604-amino-acid chain; its full sequence is Elongation factor 4 (604 aa).

A tr-type G domain is found at 8–190 (KNKRNFSIIA…AIVHRIPAPN (183 aa)). Residues 20–25 (DHGKST) and 137–140 (NKID) each bind GTP.

The protein belongs to the TRAFAC class translation factor GTPase superfamily. Classic translation factor GTPase family. LepA subfamily.

The protein localises to the cell inner membrane. It carries out the reaction GTP + H2O = GDP + phosphate + H(+). Required for accurate and efficient protein synthesis under certain stress conditions. May act as a fidelity factor of the translation reaction, by catalyzing a one-codon backward translocation of tRNAs on improperly translocated ribosomes. Back-translocation proceeds from a post-translocation (POST) complex to a pre-translocation (PRE) complex, thus giving elongation factor G a second chance to translocate the tRNAs correctly. Binds to ribosomes in a GTP-dependent manner. The chain is Elongation factor 4 from Fusobacterium nucleatum subsp. nucleatum (strain ATCC 25586 / DSM 15643 / BCRC 10681 / CIP 101130 / JCM 8532 / KCTC 2640 / LMG 13131 / VPI 4355).